The sequence spans 522 residues: Tetratricopeptide repeat protein 39C (522 aa).

3 TPR repeats span residues 254 to 287 (SLFM…AVDQ), 292 to 325 (HVCL…SRWS), and 424 to 457 (GLKH…ESCR).

It belongs to the TTC39 family.

In Rattus norvegicus (Rat), this protein is Tetratricopeptide repeat protein 39C (Ttc39c).